Consider the following 460-residue polypeptide: Argininosuccinate lyase (460 aa).

It belongs to the lyase 1 family. Argininosuccinate lyase subfamily.

It localises to the cytoplasm. The catalysed reaction is 2-(N(omega)-L-arginino)succinate = fumarate + L-arginine. The protein operates within amino-acid biosynthesis; L-arginine biosynthesis; L-arginine from L-ornithine and carbamoyl phosphate: step 3/3. This is Argininosuccinate lyase from Nitratidesulfovibrio vulgaris (strain DSM 19637 / Miyazaki F) (Desulfovibrio vulgaris).